We begin with the raw amino-acid sequence, 473 residues long: Ribulose bisphosphate carboxylase large chain (473 aa).

Residues Asn116 and Thr166 each contribute to the substrate site. The active-site Proton acceptor is the Lys168. Lys170 provides a ligand contact to substrate. 3 residues coordinate Mg(2+): Lys194, Asp196, and Glu197. Lys194 bears the N6-carboxylysine mark. His287 functions as the Proton acceptor in the catalytic mechanism. Residues Arg288, His320, and Ser372 each coordinate substrate.

It belongs to the RuBisCO large chain family. Type I subfamily. In terms of assembly, heterohexadecamer of 8 large chains and 8 small chains. Mg(2+) serves as cofactor.

The enzyme catalyses 2 (2R)-3-phosphoglycerate + 2 H(+) = D-ribulose 1,5-bisphosphate + CO2 + H2O. The catalysed reaction is D-ribulose 1,5-bisphosphate + O2 = 2-phosphoglycolate + (2R)-3-phosphoglycerate + 2 H(+). Functionally, ruBisCO catalyzes two reactions: the carboxylation of D-ribulose 1,5-bisphosphate, the primary event in carbon dioxide fixation, as well as the oxidative fragmentation of the pentose substrate. Both reactions occur simultaneously and in competition at the same active site. This is Ribulose bisphosphate carboxylase large chain from Cupriavidus metallidurans (strain ATCC 43123 / DSM 2839 / NBRC 102507 / CH34) (Ralstonia metallidurans).